Here is a 696-residue protein sequence, read N- to C-terminus: uncharacterized protein (696 aa).

A run of 10 helical transmembrane segments spans residues 38–58 (IISI…NALA), 107–127 (LIYV…GYVV), 215–235 (AMAS…IFAL), 245–265 (SLFT…VVAL), 292–312 (TLPF…LIYL), 329–349 (VFFV…ILGE), 380–400 (FWVT…LTSA), 402–422 (FGAA…ACIG), 433–453 (FPSL…FLSS), and 457–477 (LVVA…IALP). 2 consecutive CBS domains span residues 527-587 (RSPE…PMSS) and 617-674 (IHPT…THTG).

Belongs to the chloride channel (TC 2.A.49) family.

Its subcellular location is the membrane. In terms of biological role, voltage-gated chloride channel. This is an uncharacterized protein from Schizosaccharomyces pombe (strain 972 / ATCC 24843) (Fission yeast).